A 402-amino-acid polypeptide reads, in one-letter code: Plasminogen activator inhibitor 1 (402 aa).

Residues 1 to 23 form the signal peptide; the sequence is MQMSPALTCLVLGLALVFGEGSA. N-linked (GlcNAc...) asparagine glycans are attached at residues Asn232, Asn288, and Asn352.

This sequence belongs to the serpin family. As to quaternary structure, forms a heterodimer with TMPRSS7. Interacts with VTN. Binds LRP1B; binding is followed by internalization and degradation. Interacts with PPP1CB. In complex with PLAU/uPA, interacts with PLAUR/uPAR. Interacts with SORL1 and LRP1, either alone or in complex with PLAU; these interactions are abolished in the presence of LRPAP1/RAP. The ternary complex composed of PLAUR-PLAU-PAI1 also interacts with SORL1. Interacts with PLAT/tPA. Also interacts with SORL1, when complexed to PLAT/tPA. Post-translationally, inactivated by proteolytic attack of the urokinase-type (u-PA) and the tissue-type (TPA), cleaving the 369-Arg-|-Met-370 bond. Expressed in endothelial cells. Found in plasma, platelets, and hepatoma and fibrosarcoma cells.

The protein localises to the secreted. In terms of biological role, serine protease inhibitor. Inhibits TMPRSS7. Is a primary inhibitor of tissue-type plasminogen activator (PLAT) and urokinase-type plasminogen activator (PLAU). As PLAT inhibitor, it is required for fibrinolysis down-regulation and is responsible for the controlled degradation of blood clots. As PLAU inhibitor, it is involved in the regulation of cell adhesion and spreading. Acts as a regulator of cell migration, independently of its role as protease inhibitor. It is required for stimulation of keratinocyte migration during cutaneous injury repair. It is involved in cellular and replicative senescence. Plays a role in alveolar type 2 cells senescence in the lung. Is involved in the regulation of cementogenic differentiation of periodontal ligament stem cells, and regulates odontoblast differentiation and dentin formation during odontogenesis. This Homo sapiens (Human) protein is Plasminogen activator inhibitor 1 (SERPINE1).